We begin with the raw amino-acid sequence, 454 residues long: Phosphoglucosamine mutase (454 aa).

The Phosphoserine intermediate role is filled by Ser101. Mg(2+) contacts are provided by Ser101, Asp243, Asp245, and Asp247. The residue at position 101 (Ser101) is a Phosphoserine.

The protein belongs to the phosphohexose mutase family. Requires Mg(2+) as cofactor. Post-translationally, activated by phosphorylation.

The catalysed reaction is alpha-D-glucosamine 1-phosphate = D-glucosamine 6-phosphate. In terms of biological role, catalyzes the conversion of glucosamine-6-phosphate to glucosamine-1-phosphate. This chain is Phosphoglucosamine mutase, found in Citrifermentans bemidjiense (strain ATCC BAA-1014 / DSM 16622 / JCM 12645 / Bem) (Geobacter bemidjiensis).